A 212-amino-acid chain; its full sequence is MKNLTIGAIFLIFFAVSAFASAPCPKKLADTTCPREPYSFEGMKRQEPIKGRNVGWFQCQATMTVHDPVTTAVLVTQPTFTFNLSTLYHNSCGCWKTVTTIPGDAVKMEYGNGLPGQAMYGSCFYATWADLAGNPVETVGFARNVVGVHRDLIYVSRATNELVVHQSIYPLGRDQVGDEYVLVRHFDPVTKGIDWVQAVYCTKIQDQLEPLP.

The first 20 residues, 1–20 (MKNLTIGAIFLIFFAVSAFA), serve as a signal peptide directing secretion.

Its subcellular location is the virion. This is an uncharacterized protein from Acanthamoeba polyphaga (Amoeba).